The primary structure comprises 87 residues: Cell division topological specificity factor (87 aa).

The protein belongs to the MinE family.

Its function is as follows. Prevents the cell division inhibition by proteins MinC and MinD at internal division sites while permitting inhibition at polar sites. This ensures cell division at the proper site by restricting the formation of a division septum at the midpoint of the long axis of the cell. In Neisseria meningitidis serogroup C (strain 053442), this protein is Cell division topological specificity factor.